Consider the following 363-residue polypeptide: Isopentenyl-diphosphate delta-isomerase (363 aa).

A substrate-binding site is contributed by 6–7; it reads RK. FMN contacts are provided by residues 64–66, serine 94, and asparagine 123; that span reads AMT. Position 153 (glutamine 153) interacts with substrate. Residue glutamate 154 participates in Mg(2+) binding. Residues lysine 185, serine 210, threonine 215, 259–261, and 280–281 each bind FMN; these read GVR and SA.

It belongs to the IPP isomerase type 2 family. In terms of assembly, homooctamer. Dimer of tetramers. Mg(2+) is required as a cofactor. Requires FMN as cofactor. NADPH serves as cofactor.

Its subcellular location is the cytoplasm. The enzyme catalyses isopentenyl diphosphate = dimethylallyl diphosphate. In terms of biological role, involved in the biosynthesis of isoprenoids. Catalyzes the 1,3-allylic rearrangement of the homoallylic substrate isopentenyl (IPP) to its allylic isomer, dimethylallyl diphosphate (DMAPP). The chain is Isopentenyl-diphosphate delta-isomerase from Streptomyces sp. (strain CL190).